Reading from the N-terminus, the 883-residue chain is MKKTTNEIRQSFLNFFKEKEHVIVPSSSLIPENDSTLLFTNAGMNQFKEYFLGQKKKFYPRVTTVQNCLRTGGKHNDLENVGYTKRHHTFFEMLGNFSFNDYFKKEAITYAWELLTSRKWFNIDKNKLWISVYEDDEETYKIWRDIIRIPCHHIVKIGSKNNSQYDSENFWQMGETGPCGPCTEIFYNYDDSNKSNDFLKDKNESFIEIWNIVFIEFNRISKTKIVPLINKSIDTGMGLERISAVLQNVHSNYKIDIFQKLIQKISNFTEIKDLNNISLKIIADHIRSCAFLIAENILPSNEHRGYVLRRIIRRALRHGHKIGIKNNFFYKLVPSLIEIMGDSAKILRKKEKIIEETLKIEEIQFSQTLDKGLKILNAEIKKSTNKTISGKTAFYLYDTFGFPIDLTSDICSEKNIKIDFKGFNIAKEEQKKRSSIKNKFYKDYNKDIIINDTCIFEGYKKNKTKSLVKYIFIKNESVFLIYKGQTATIFLDKTSFYPESGGQIGDIGELYHKKSRFIVENTKKYGDTIGHYGKLISGKIIVNDSIYSKINHVYRNAIQLNHSATHLLHAALQKVLGKNAIQKGSLVSNTHLRFDFSYSGNINLSQIQNIENIINKKIRSNDLIKIKNLSLEEAKKKKAIALFDYKYQSSVRVVFIKDFSIELCGGTHTKRTGNIGLFKIIEQSSVSSGIKRIEAVTGQQAIDYLHIKDNDMQNISFLLKCQNSKITEKIKKIIIQVEKLEKKTDQLQKRENIYQIKKLSKKINNIKGINLLINTFTNYDQKSMKMIIDQLKKELKISIIIFINKNKNDFTVIIRVTKNLINYITALKIINIFIKKANGKGGGKKEIAEGGGMNIKKLPMILNYIKSWITIQLENIKTKNFNN.

4 residues coordinate Zn(2+): histidine 562, histidine 566, cysteine 664, and histidine 668.

This sequence belongs to the class-II aminoacyl-tRNA synthetase family. In terms of assembly, homotetramer. Zn(2+) serves as cofactor.

The protein resides in the cytoplasm. The catalysed reaction is tRNA(Ala) + L-alanine + ATP = L-alanyl-tRNA(Ala) + AMP + diphosphate. Its function is as follows. Catalyzes the attachment of alanine to tRNA(Ala) in a two-step reaction: alanine is first activated by ATP to form Ala-AMP and then transferred to the acceptor end of tRNA(Ala). Also edits incorrectly charged Ser-tRNA(Ala) and Gly-tRNA(Ala) via its editing domain. The protein is Alanine--tRNA ligase of Buchnera aphidicola subsp. Schizaphis graminum (strain Sg).